Here is a 300-residue protein sequence, read N- to C-terminus: Chaperone protein dnaJ 50 (300 aa).

Positions M1 to A27 are cleaved as a signal peptide. Residues I28–P122 are Lumenal-facing. In terms of domain architecture, J spans D34–I98. N-linked (GlcNAc...) asparagine glycosylation is found at N46 and N88. Residues R123–A143 traverse the membrane as a helical segment. Residues R144–S206 are Cytoplasmic-facing. Residues V207–V227 form a helical membrane-spanning segment. At W228–R300 the chain is on the lumenal side.

Expressed in leaves, flower buds and flowers.

It localises to the endoplasmic reticulum membrane. Functionally, may play a role in protein folding in the endoplasmic reticulum. The protein is Chaperone protein dnaJ 50 (C50) of Arabidopsis thaliana (Mouse-ear cress).